The chain runs to 188 residues: Elongation factor P (188 aa).

The protein belongs to the elongation factor P family.

The protein localises to the cytoplasm. Its pathway is protein biosynthesis; polypeptide chain elongation. Functionally, involved in peptide bond synthesis. Stimulates efficient translation and peptide-bond synthesis on native or reconstituted 70S ribosomes in vitro. Probably functions indirectly by altering the affinity of the ribosome for aminoacyl-tRNA, thus increasing their reactivity as acceptors for peptidyl transferase. In Rickettsia prowazekii (strain Madrid E), this protein is Elongation factor P (efp).